The primary structure comprises 579 residues: Vitamin B6 transporter TPN1 (579 aa).

12 helical membrane-spanning segments follow: residues 99–119 (TGGL…GLSF), 123–143 (LASS…CSIM), 158–178 (LFGW…VMGW), 199–219 (PLWV…IFGI), 222–242 (VIKV…LLYI), 275–295 (LCYS…ILFP), 303–323 (IFCL…ILGL), 363–383 (VVVL…SAAF), 395–415 (IPRW…ALIG), 422–442 (ILGN…ILLF), 520–540 (FAFI…YWIG), and 546–566 (FGEY…GVVY).

Belongs to the purine-cytosine permease (2.A.39) family.

The protein localises to the membrane. In terms of biological role, thiamine-regulated, high affinity import carrier of pyridoxine, pyridoxal and pyridoxamine. This is Vitamin B6 transporter TPN1 (TPN1) from Saccharomyces cerevisiae (Baker's yeast).